The sequence spans 1199 residues: DNA-directed RNA polymerase subunit beta (1199 aa).

A disordered region spans residues 1177-1199; it reads EQEEKKAKEAEQETAEKEETKTE.

It belongs to the RNA polymerase beta chain family. The RNAP catalytic core consists of 2 alpha, 1 beta, 1 beta' and 1 omega subunit. When a sigma factor is associated with the core the holoenzyme is formed, which can initiate transcription.

The catalysed reaction is RNA(n) + a ribonucleoside 5'-triphosphate = RNA(n+1) + diphosphate. In terms of biological role, DNA-dependent RNA polymerase catalyzes the transcription of DNA into RNA using the four ribonucleoside triphosphates as substrates. This Ligilactobacillus salivarius (strain UCC118) (Lactobacillus salivarius) protein is DNA-directed RNA polymerase subunit beta.